Here is a 111-residue protein sequence, read N- to C-terminus: Large ribosomal subunit protein uL22 (111 aa).

Belongs to the universal ribosomal protein uL22 family. As to quaternary structure, part of the 50S ribosomal subunit.

Functionally, this protein binds specifically to 23S rRNA; its binding is stimulated by other ribosomal proteins, e.g. L4, L17, and L20. It is important during the early stages of 50S assembly. It makes multiple contacts with different domains of the 23S rRNA in the assembled 50S subunit and ribosome. In terms of biological role, the globular domain of the protein is located near the polypeptide exit tunnel on the outside of the subunit, while an extended beta-hairpin is found that lines the wall of the exit tunnel in the center of the 70S ribosome. This is Large ribosomal subunit protein uL22 from Geobacter sulfurreducens (strain ATCC 51573 / DSM 12127 / PCA).